We begin with the raw amino-acid sequence, 266 residues long: Imidazole glycerol phosphate synthase subunit HisF (266 aa).

Residues Asp11 and Asp130 contribute to the active site.

The protein belongs to the HisA/HisF family. Heterodimer of HisH and HisF.

The protein resides in the cytoplasm. The enzyme catalyses 5-[(5-phospho-1-deoxy-D-ribulos-1-ylimino)methylamino]-1-(5-phospho-beta-D-ribosyl)imidazole-4-carboxamide + L-glutamine = D-erythro-1-(imidazol-4-yl)glycerol 3-phosphate + 5-amino-1-(5-phospho-beta-D-ribosyl)imidazole-4-carboxamide + L-glutamate + H(+). The protein operates within amino-acid biosynthesis; L-histidine biosynthesis; L-histidine from 5-phospho-alpha-D-ribose 1-diphosphate: step 5/9. Functionally, IGPS catalyzes the conversion of PRFAR and glutamine to IGP, AICAR and glutamate. The HisF subunit catalyzes the cyclization activity that produces IGP and AICAR from PRFAR using the ammonia provided by the HisH subunit. The polypeptide is Imidazole glycerol phosphate synthase subunit HisF (Nitrosopumilus maritimus (strain SCM1)).